Consider the following 483-residue polypeptide: Regulatory protein ViaA (483 aa).

The protein belongs to the ViaA family. As to quaternary structure, homodimer. Interacts with RavA.

It localises to the cytoplasm. Functionally, component of the RavA-ViaA chaperone complex, which may act on the membrane to optimize the function of some of the respiratory chains. ViaA stimulates the ATPase activity of RavA. This is Regulatory protein ViaA from Shigella boydii serotype 18 (strain CDC 3083-94 / BS512).